The following is a 471-amino-acid chain: V-type ATP synthase beta chain (471 aa).

It belongs to the ATPase alpha/beta chains family.

Functionally, produces ATP from ADP in the presence of a proton gradient across the membrane. The V-type beta chain is a regulatory subunit. This Streptococcus pyogenes serotype M18 (strain MGAS8232) protein is V-type ATP synthase beta chain.